Here is a 366-residue protein sequence, read N- to C-terminus: MRVMAPRTLILPLSGALALTETWAGSHSMRYFYTSVSRPGRGEPRFISVGYVDDTQFVRFDSDAASPRGEPRAPWVEQEGPEYWDRETQKYKRQAQTDRVNLRKLRGYYNQSEDGSHTLQSMYGCDLGPDGRLLRGYSQFAYDGKDYIALNEDLRSWTAADTAAQVTQRKWEAARVAEQERAYLEGLCVEWLRRYLENGKETLQRAEPPKTHVTHHPLSDHEATLRCWALGFYPAEITLTWQRDGEDQTQDTELVETRPAGDGTFQKWAAVVVPSGQEQRYTCHMQHEGLPEPLTLRWEPSSQPTIPIVGIVVGLAVLVVLAVLGAVVTAMMCRRKSSGGKGGSCSQAACSNSAQGSDESLITCKA.

Residues 1–24 (MRVMAPRTLILPLSGALALTETWA) form the signal peptide. Residues 25–114 (GSHSMRYFYT…LRGYYNQSED (90 aa)) are alpha-1. Residues 25–308 (GSHSMRYFYT…EPSSQPTIPI (284 aa)) are Extracellular-facing. A glycan (N-linked (GlcNAc...) asparagine) is linked at Asn110. The segment at 115–206 (GSHTLQSMYG…ENGKETLQRA (92 aa)) is alpha-2. 2 disulfides stabilise this stretch: Cys125/Cys188 and Cys227/Cys283. An alpha-3 region spans residues 207 to 298 (EPPKTHVTHH…GLPEPLTLRW (92 aa)). The Ig-like C1-type domain maps to 209-297 (PKTHVTHHPL…EGLPEPLTLR (89 aa)). Positions 299 to 308 (EPSSQPTIPI) are connecting peptide. The chain crosses the membrane as a helical span at residues 309–333 (VGIVVGLAVLVVLAVLGAVVTAMMC). Residues 334-366 (RRKSSGGKGGSCSQAACSNSAQGSDESLITCKA) are Cytoplasmic-facing.

The protein belongs to the MHC class I family. Heterodimer of an alpha chain and a beta chain (beta-2-microglobulin).

The protein resides in the membrane. In terms of biological role, involved in the presentation of foreign antigens to the immune system. In Gorilla gorilla gorilla (Western lowland gorilla), this protein is Class I histocompatibility antigen, Gogo-C*0201 alpha chain.